A 319-amino-acid polypeptide reads, in one-letter code: Acetyl-coenzyme A carboxylase carboxyl transferase subunit alpha (319 aa).

A CoA carboxyltransferase C-terminal domain is found at 35–296; it reads DLEKEIKQLE…KQRLLEQLKE (262 aa).

It belongs to the AccA family. Acetyl-CoA carboxylase is a heterohexamer composed of biotin carboxyl carrier protein (AccB), biotin carboxylase (AccC) and two subunits each of ACCase subunit alpha (AccA) and ACCase subunit beta (AccD).

Its subcellular location is the cytoplasm. It carries out the reaction N(6)-carboxybiotinyl-L-lysyl-[protein] + acetyl-CoA = N(6)-biotinyl-L-lysyl-[protein] + malonyl-CoA. It participates in lipid metabolism; malonyl-CoA biosynthesis; malonyl-CoA from acetyl-CoA: step 1/1. Component of the acetyl coenzyme A carboxylase (ACC) complex. First, biotin carboxylase catalyzes the carboxylation of biotin on its carrier protein (BCCP) and then the CO(2) group is transferred by the carboxyltransferase to acetyl-CoA to form malonyl-CoA. The polypeptide is Acetyl-coenzyme A carboxylase carboxyl transferase subunit alpha (Aliivibrio fischeri (strain MJ11) (Vibrio fischeri)).